The primary structure comprises 671 residues: tRNA 5-methylaminomethyl-2-thiouridine biosynthesis bifunctional protein MnmC (671 aa).

Positions 1–245 are tRNA (mnm(5)s(2)U34)-methyltransferase; it reads MVNVMNTLSF…KREMLWGEKP (245 aa). Positions 272 to 671 are FAD-dependent cmnm(5)s(2)U34 oxidoreductase; the sequence is VGGGVASLFV…RKLLKGSKVE (400 aa).

The protein in the N-terminal section; belongs to the methyltransferase superfamily. tRNA (mnm(5)s(2)U34)-methyltransferase family. It in the C-terminal section; belongs to the DAO family. Requires FAD as cofactor.

Its subcellular location is the cytoplasm. The enzyme catalyses 5-aminomethyl-2-thiouridine(34) in tRNA + S-adenosyl-L-methionine = 5-methylaminomethyl-2-thiouridine(34) in tRNA + S-adenosyl-L-homocysteine + H(+). Its function is as follows. Catalyzes the last two steps in the biosynthesis of 5-methylaminomethyl-2-thiouridine (mnm(5)s(2)U) at the wobble position (U34) in tRNA. Catalyzes the FAD-dependent demodification of cmnm(5)s(2)U34 to nm(5)s(2)U34, followed by the transfer of a methyl group from S-adenosyl-L-methionine to nm(5)s(2)U34, to form mnm(5)s(2)U34. This is tRNA 5-methylaminomethyl-2-thiouridine biosynthesis bifunctional protein MnmC from Actinobacillus pleuropneumoniae serotype 3 (strain JL03).